A 753-amino-acid chain; its full sequence is Polyadenylate-binding protein, cytoplasmic and nuclear (753 aa).

The segment covering 1–26 (MSAEVSTTPAADNTVNGTPEATNAAA) has biased composition (polar residues). Positions 1–52 (MSAEVSTTPAADNTVNGTPEATNAAATSAPEVTAVESASPSTTPSASQPHSA) are disordered. Positions 37–52 (SASPSTTPSASQPHSA) are enriched in low complexity. 4 RRM domains span residues 52 to 130 (ASLY…WSQR), 140 to 217 (GNVF…HHIS), 233 to 310 (TNVY…RAQK), and 336 to 460 (VNLY…LAQR). 2 disordered regions span residues 367–417 (VMRD…TEKK) and 602–645 (MGQG…REEV). Residues 379–417 (ESEKEKEKESNKENEKEGEEKTEEKPKESEEEPKKTEKK) show a composition bias toward basic and acidic residues. Residues 605–631 (GIRGPGYGQGRGGAPVQGGPRPQGGRG) are compositionally biased toward gly residues. Residues 648–725 (TGGLTAQTLS…ALSVYDEYMK (78 aa)) form the PABC domain. The disordered stretch occupies residues 728–753 (GEGEAPAESAKPKEDAAETATEENKS). Basic and acidic residues predominate over residues 737-753 (AKPKEDAAETATEENKS).

The protein belongs to the polyadenylate-binding protein type-1 family.

The protein resides in the cytoplasm. It localises to the nucleus. Functionally, binds the poly(A) tail of mRNA. Appears to be an important mediator of the multiple roles of the poly(A) tail in mRNA biogenesis, stability and translation. In the nucleus, involved in both mRNA cleavage and polyadenylation. Is also required for efficient mRNA export to the cytoplasm. Acts in concert with a poly(A)-specific nuclease (PAN) to affect poly(A) tail shortening, which may occur concomitantly with either nucleocytoplasmic mRNA transport or translational initiation. In the cytoplasm, stimulates translation initiation and regulates mRNA decay through translation termination-coupled poly(A) shortening, probably mediated by PAN. This is Polyadenylate-binding protein, cytoplasmic and nuclear (pab1) from Aspergillus fumigatus (strain ATCC MYA-4609 / CBS 101355 / FGSC A1100 / Af293) (Neosartorya fumigata).